We begin with the raw amino-acid sequence, 953 residues long: Glutamate receptor 3.5 (953 aa).

The signal sequence occupies residues 1–29; that stretch reads MGFFVMIRDVSMGFMLLCISALWVLPIQG. Residues 30–606 are Extracellular-facing; that stretch reads AGRESFSRNS…SPWSFLKPFT (577 aa). N-linked (GlcNAc...) asparagine glycosylation is found at Asn-38, Asn-95, Asn-223, Asn-371, Asn-397, Asn-436, Asn-454, and Asn-569. Residues 607–627 traverse the membrane as a helical segment; the sequence is IEMWAVTGALFLFVGAVIWIL. Residues 628 to 636 lie on the Cytoplasmic side of the membrane; sequence EHRFNEEFR. The helical transmembrane segment at 637–657 threads the bilayer; it reads GPPRRQIITVFWFSFSTMFFS. Over 658–668 the chain is Cytoplasmic; sequence HRENTVSTLGR. The helical transmembrane segment at 669-689 threads the bilayer; it reads FVLLVWLFVVLIINSSYTASL. Residues 690-850 are Extracellular-facing; sequence TSILTVQQLT…TENYQISVQS (161 aa). Residues 851 to 871 traverse the membrane as a helical segment; sequence FWGLFLICGVVWFIALTLFCW. Residues 872–953 lie on the Cytoplasmic side of the membrane; that stretch reads KVFWQYQRLR…SQSKDHETPQ (82 aa). A disordered region spans residues 928-953; it reads EKSSKKLKDGQSSAENSQSKDHETPQ.

It belongs to the glutamate-gated ion channel (TC 1.A.10.1) family. In terms of assembly, may form heteromers. As to expression, expressed predominantly in roots. Also detected in shoots.

The protein localises to the membrane. Glutamate-gated receptor that probably acts as a non-selective cation channel. May be involved in light-signal transduction and calcium homeostasis via the regulation of calcium influx into cells. The chain is Glutamate receptor 3.5 (GLR3.5) from Arabidopsis thaliana (Mouse-ear cress).